Reading from the N-terminus, the 287-residue chain is MEMO1 family protein MJ0403 (287 aa).

This sequence belongs to the MEMO1 family.

This is MEMO1 family protein MJ0403 from Methanocaldococcus jannaschii (strain ATCC 43067 / DSM 2661 / JAL-1 / JCM 10045 / NBRC 100440) (Methanococcus jannaschii).